We begin with the raw amino-acid sequence, 255 residues long: MDELEIGGVKLDSRLFVGTGKLASNEVIPKIMEKSNSKVITVALRRVDITSKQDNILNFIDKDLILLPNTSGARNAEEAIRLARIAKAAGCGNWIKIEVISDNKYLLPDNYETIKATEALVKEGFIVLPYVNPDLMDARRLVNVGAAAVMPLGAPIGSNRGLRTKEMLKILIEEINEVPVVVDAGIGKPSDAAMAMEMGADAVLVNTAIATADNPVLMAEAFSLAVKAGRMAYVAKIGEEKEYASASSPLTGFLR.

Residue Lys-96 is the Schiff-base intermediate with DXP of the active site. 1-deoxy-D-xylulose 5-phosphate contacts are provided by residues Gly-157, Ala-184–Gly-185, and Asn-206–Thr-207.

This sequence belongs to the ThiG family. Homotetramer. Forms heterodimers with either ThiH or ThiS.

It is found in the cytoplasm. It carries out the reaction [ThiS sulfur-carrier protein]-C-terminal-Gly-aminoethanethioate + 2-iminoacetate + 1-deoxy-D-xylulose 5-phosphate = [ThiS sulfur-carrier protein]-C-terminal Gly-Gly + 2-[(2R,5Z)-2-carboxy-4-methylthiazol-5(2H)-ylidene]ethyl phosphate + 2 H2O + H(+). It participates in cofactor biosynthesis; thiamine diphosphate biosynthesis. Catalyzes the rearrangement of 1-deoxy-D-xylulose 5-phosphate (DXP) to produce the thiazole phosphate moiety of thiamine. Sulfur is provided by the thiocarboxylate moiety of the carrier protein ThiS. In vitro, sulfur can be provided by H(2)S. This chain is Thiazole synthase, found in Clostridium acetobutylicum (strain ATCC 824 / DSM 792 / JCM 1419 / IAM 19013 / LMG 5710 / NBRC 13948 / NRRL B-527 / VKM B-1787 / 2291 / W).